A 348-amino-acid polypeptide reads, in one-letter code: Zinc-type alcohol dehydrogenase-like protein C2E1P3.01 (348 aa).

The protein belongs to the zinc-containing alcohol dehydrogenase family. Quinone oxidoreductase subfamily.

The protein localises to the mitochondrion. The sequence is that of Zinc-type alcohol dehydrogenase-like protein C2E1P3.01 from Schizosaccharomyces pombe (strain 972 / ATCC 24843) (Fission yeast).